The sequence spans 342 residues: MKVSDIAGALGLKLKGPDREISGVNTLEAAGPEEISFLANPKYIPMLAGTRAAAVIVSEEYAGQVETALISANPYFDFGRTLHLFARPQGSFSGISDMAYIHPEAEIGGGCTIYPHVYIGARARIGEGTTLFPGCYVGEDCAVGENCLLYPNVTLMAATTVGDDCVLHSGVVLGADGFGFARTEYGIQKIPQIGRVHVGNDVEIGANTAIDRAVLGVTTIGDGTKMDNLVQVGHNVTIGNDCLIVAQVGISGSTHVGDRVTMAGQVGVAGHLTIGDDVTVGPKSGIARSIEPGKTMGGQPAVERDVYMRTLTVMPKLPDMYKRLRKLEKELEALKGESGRDS.

His234 acts as the Proton acceptor in catalysis.

It belongs to the transferase hexapeptide repeat family. LpxD subfamily. Homotrimer.

The catalysed reaction is a UDP-3-O-[(3R)-3-hydroxyacyl]-alpha-D-glucosamine + a (3R)-hydroxyacyl-[ACP] = a UDP-2-N,3-O-bis[(3R)-3-hydroxyacyl]-alpha-D-glucosamine + holo-[ACP] + H(+). Its pathway is bacterial outer membrane biogenesis; LPS lipid A biosynthesis. Its function is as follows. Catalyzes the N-acylation of UDP-3-O-acylglucosamine using 3-hydroxyacyl-ACP as the acyl donor. Is involved in the biosynthesis of lipid A, a phosphorylated glycolipid that anchors the lipopolysaccharide to the outer membrane of the cell. This is UDP-3-O-acylglucosamine N-acyltransferase from Oleidesulfovibrio alaskensis (strain ATCC BAA-1058 / DSM 17464 / G20) (Desulfovibrio alaskensis).